Here is a 325-residue protein sequence, read N- to C-terminus: uncharacterized protein (325 aa).

The disordered stretch occupies residues 1-75 (MSQPPEHPGN…PPPGYPTHLQ (75 aa)). A compositionally biased stretch (pro residues) spans 24–70 (YPPPGYGAPPPPPGYGPPPGTYLPPGYNAPPPPPGYGPPPGPPPPGY). The next 4 helical transmembrane spans lie at 96 to 116 (AVTL…VIGA), 153 to 173 (IVMF…HAGI), 205 to 225 (LLIV…GLIF), and 273 to 293 (LVGE…AALI).

It localises to the cell membrane. This is an uncharacterized protein from Mycobacterium tuberculosis (strain ATCC 25618 / H37Rv).